The chain runs to 502 residues: Glycerol kinase (502 aa).

T14 is a binding site for ADP. Residues T14, T15, and S16 each contribute to the ATP site. A sn-glycerol 3-phosphate-binding site is contributed by T14. R18 is an ADP binding site. Sn-glycerol 3-phosphate-binding residues include R84, E85, Y136, and D246. Glycerol-binding residues include R84, E85, Y136, D246, and Q247. Residues T268 and G311 each contribute to the ADP site. Residues T268, G311, Q315, and G412 each coordinate ATP. G412 and N416 together coordinate ADP.

It belongs to the FGGY kinase family. As to quaternary structure, homotetramer and homodimer (in equilibrium). Heterodimer with EIIA-Glc. Binds 1 zinc ion per glycerol kinase EIIA-Glc dimer. The zinc ion is important for dimerization.

The catalysed reaction is glycerol + ATP = sn-glycerol 3-phosphate + ADP + H(+). Its pathway is polyol metabolism; glycerol degradation via glycerol kinase pathway; sn-glycerol 3-phosphate from glycerol: step 1/1. Activity of this regulatory enzyme is affected by several metabolites. Allosterically and non-competitively inhibited by fructose 1,6-bisphosphate (FBP) and unphosphorylated phosphocarrier protein EIIA-Glc (III-Glc), an integral component of the bacterial phosphotransferase (PTS) system. Its function is as follows. Key enzyme in the regulation of glycerol uptake and metabolism. Catalyzes the phosphorylation of glycerol to yield sn-glycerol 3-phosphate. The chain is Glycerol kinase from Salmonella agona (strain SL483).